The following is a 249-amino-acid chain: Ubiquinone/menaquinone biosynthesis C-methyltransferase UbiE (249 aa).

S-adenosyl-L-methionine-binding positions include Thr-74, Asp-93, and Asp-121–Ala-122.

This sequence belongs to the class I-like SAM-binding methyltransferase superfamily. MenG/UbiE family.

The enzyme catalyses a 2-demethylmenaquinol + S-adenosyl-L-methionine = a menaquinol + S-adenosyl-L-homocysteine + H(+). It carries out the reaction a 2-methoxy-6-(all-trans-polyprenyl)benzene-1,4-diol + S-adenosyl-L-methionine = a 5-methoxy-2-methyl-3-(all-trans-polyprenyl)benzene-1,4-diol + S-adenosyl-L-homocysteine + H(+). It functions in the pathway quinol/quinone metabolism; menaquinone biosynthesis; menaquinol from 1,4-dihydroxy-2-naphthoate: step 2/2. Its pathway is cofactor biosynthesis; ubiquinone biosynthesis. Functionally, methyltransferase required for the conversion of demethylmenaquinol (DMKH2) to menaquinol (MKH2) and the conversion of 2-polyprenyl-6-methoxy-1,4-benzoquinol (DDMQH2) to 2-polyprenyl-3-methyl-6-methoxy-1,4-benzoquinol (DMQH2). The sequence is that of Ubiquinone/menaquinone biosynthesis C-methyltransferase UbiE from Acidiphilium cryptum (strain JF-5).